The following is a 141-amino-acid chain: Acetyltransferase YpeA (141 aa).

Residues 1-141 form the N-acetyltransferase domain; that stretch reads MEIRVFRQED…GKRLIEDEEY (141 aa).

This sequence belongs to the acetyltransferase family. YpeA subfamily.

The protein is Acetyltransferase YpeA (ypeA) of Escherichia coli (strain K12).